The sequence spans 257 residues: MSRPLITRSPASPLNNQGIPTPAQLTKSNAPVHIDVGGHMYTSSLATLTKYPESRIGRLFDGTEPIVLDSLKQHYFIDRDGQMFRYILNFLRTSKLLIPDDFKDYTLLYEEAKYFQLQPMLLEMERWKQDRETGRFSRPCECLVVRVAPDLGERITLSGDKSLIEEVFPEIGDVMCNSVNAGWNHDSTHVIRFPLNGYCHLNSVQVLERLQQRGFEIVGSCGGGVDSSQFSEYVLRRELRRTPRVPSVIRIKQEPLD.

Residues 1 to 25 (MSRPLITRSPASPLNNQGIPTPAQL) form a disordered region. Phosphoserine occurs at positions 9 and 12. Residues 9–25 (SPASPLNNQGIPTPAQL) show a composition bias toward polar residues. The BTB domain occupies 30 to 100 (APVHIDVGGH…LRTSKLLIPD (71 aa)).

Forms homopentamers. Interacts with KCTD15, probably forming heteropentamers depending on its abundance in a cell-type dependent manner. Interacts with TFAP2A, TFAP2B and TFAP2C via the BTB domain. Sumoylated. As to expression, expressed in mammary gland, kidney, brain and ovary.

The protein localises to the nucleus. Its function is as follows. May repress the transcriptional activity of AP-2 family members, including TFAP2A, TFAP2B and TFAP2C to various extent. The chain is BTB/POZ domain-containing protein KCTD1 (KCTD1) from Homo sapiens (Human).